Reading from the N-terminus, the 281-residue chain is Bifunctional protein FolD (281 aa).

NADP(+) is bound by residues 167-169 and S192; that span reads GRS.

The protein belongs to the tetrahydrofolate dehydrogenase/cyclohydrolase family. In terms of assembly, homodimer.

It carries out the reaction (6R)-5,10-methylene-5,6,7,8-tetrahydrofolate + NADP(+) = (6R)-5,10-methenyltetrahydrofolate + NADPH. The catalysed reaction is (6R)-5,10-methenyltetrahydrofolate + H2O = (6R)-10-formyltetrahydrofolate + H(+). It participates in one-carbon metabolism; tetrahydrofolate interconversion. Catalyzes the oxidation of 5,10-methylenetetrahydrofolate to 5,10-methenyltetrahydrofolate and then the hydrolysis of 5,10-methenyltetrahydrofolate to 10-formyltetrahydrofolate. In Alcanivorax borkumensis (strain ATCC 700651 / DSM 11573 / NCIMB 13689 / SK2), this protein is Bifunctional protein FolD.